The chain runs to 24 residues: Alpha-lactalbumin (24 aa).

Belongs to the glycosyl hydrolase 22 family. As to quaternary structure, lactose synthase (LS) is a heterodimer of a catalytic component, beta1,4-galactosyltransferase (beta4Gal-T1) and a regulatory component, alpha-lactalbumin (LA). Post-translationally, glycosylated (50% of the proteins). In terms of tissue distribution, mammary gland specific. Secreted in milk.

Its subcellular location is the secreted. Its function is as follows. Regulatory subunit of lactose synthase, changes the substrate specificity of galactosyltransferase in the mammary gland making glucose a good acceptor substrate for this enzyme. This enables LS to synthesize lactose, the major carbohydrate component of milk. In other tissues, galactosyltransferase transfers galactose onto the N-acetylglucosamine of the oligosaccharide chains in glycoproteins. This is Alpha-lactalbumin (LALBA) from Felis catus (Cat).